A 352-amino-acid polypeptide reads, in one-letter code: Ribosomal RNA large subunit methyltransferase M (352 aa).

S-adenosyl-L-methionine is bound by residues Ser-187, 218-221 (APGG), Asp-237, Asp-257, and Asp-273. Lys-302 (proton acceptor) is an active-site residue.

Belongs to the class I-like SAM-binding methyltransferase superfamily. RNA methyltransferase RlmE family. RlmM subfamily. In terms of assembly, monomer.

Its subcellular location is the cytoplasm. It catalyses the reaction cytidine(2498) in 23S rRNA + S-adenosyl-L-methionine = 2'-O-methylcytidine(2498) in 23S rRNA + S-adenosyl-L-homocysteine + H(+). Catalyzes the 2'-O-methylation at nucleotide C2498 in 23S rRNA. This Methylococcus capsulatus (strain ATCC 33009 / NCIMB 11132 / Bath) protein is Ribosomal RNA large subunit methyltransferase M.